We begin with the raw amino-acid sequence, 249 residues long: Octanoyltransferase (249 aa).

A BPL/LPL catalytic domain is found at 53–234 (PDTDDEIWVV…RLIAHLDGAT (182 aa)). Residues 93-100 (RGGQITYH), 165-167 (ALG), and 178-180 (GLS) each bind substrate. The active-site Acyl-thioester intermediate is Cys-196.

Belongs to the LipB family.

It localises to the cytoplasm. It carries out the reaction octanoyl-[ACP] + L-lysyl-[protein] = N(6)-octanoyl-L-lysyl-[protein] + holo-[ACP] + H(+). It participates in protein modification; protein lipoylation via endogenous pathway; protein N(6)-(lipoyl)lysine from octanoyl-[acyl-carrier-protein]: step 1/2. In terms of biological role, catalyzes the transfer of endogenously produced octanoic acid from octanoyl-acyl-carrier-protein onto the lipoyl domains of lipoate-dependent enzymes. Lipoyl-ACP can also act as a substrate although octanoyl-ACP is likely to be the physiological substrate. The chain is Octanoyltransferase from Burkholderia mallei (strain NCTC 10247).